The sequence spans 275 residues: MGEHNLLNPGFVGPLVNIHTGDTFYFPNFRPSGGQLPGLPSLSYPRRDNVCSLPWNPSEPCNGYSQSYFSSPVSINPSFNRSCEITRADDGKCYYNNGSGSRENCSGGGSLKREDRARDTSALTSDHGMHAGIGSTVAFSKYDYGTEQLTQDPPSCQSMESDSSSSLLNEASKPSSSDTQTLVSPGSHTGTITASGAAPWYPMHTRTRKKRKPYSKLQLAELEGEFMMNEFITRQRRRELSDRLNLSDQQVKIWFQNRRMKKKRLMLREQALAYF.

Disordered regions lie at residues 101-129 (SREN…DHGM) and 148-213 (QLTQ…KRKP). A compositionally biased stretch (low complexity) spans 155 to 177 (SCQSMESDSSSSLLNEASKPSSS). Over residues 178–194 (DTQTLVSPGSHTGTITA) the composition is skewed to polar residues. The homeobox DNA-binding region spans 207–266 (TRKKRKPYSKLQLAELEGEFMMNEFITRQRRRELSDRLNLSDQQVKIWFQNRRMKKKRLM).

It belongs to the Abd-B homeobox family.

The protein resides in the nucleus. Sequence-specific transcription factor which is part of a developmental regulatory system that provides cells with specific positional identities on the anterior-posterior axis. In Takifugu rubripes (Japanese pufferfish), this protein is Homeobox protein Hox-C12a (hoxc12a).